A 272-amino-acid polypeptide reads, in one-letter code: Ribosomal RNA small subunit methyltransferase A (272 aa).

Positions 18, 20, 45, 66, 91, and 113 each coordinate S-adenosyl-L-methionine.

Belongs to the class I-like SAM-binding methyltransferase superfamily. rRNA adenine N(6)-methyltransferase family. RsmA subfamily.

It localises to the cytoplasm. It carries out the reaction adenosine(1518)/adenosine(1519) in 16S rRNA + 4 S-adenosyl-L-methionine = N(6)-dimethyladenosine(1518)/N(6)-dimethyladenosine(1519) in 16S rRNA + 4 S-adenosyl-L-homocysteine + 4 H(+). Its function is as follows. Specifically dimethylates two adjacent adenosines (A1518 and A1519) in the loop of a conserved hairpin near the 3'-end of 16S rRNA in the 30S particle. May play a critical role in biogenesis of 30S subunits. This is Ribosomal RNA small subunit methyltransferase A from Yersinia pestis bv. Antiqua (strain Antiqua).